The following is a 165-amino-acid chain: Regulator of ribonuclease activity A (165 aa).

Belongs to the RraA family. In terms of assembly, homotrimer. Binds to both RNA-binding sites in the C-terminal region of Rne and to RhlB.

The protein resides in the cytoplasm. In terms of biological role, globally modulates RNA abundance by binding to RNase E (Rne) and regulating its endonucleolytic activity. Can modulate Rne action in a substrate-dependent manner by altering the composition of the degradosome. Modulates RNA-binding and helicase activities of the degradosome. In Haemophilus ducreyi (strain 35000HP / ATCC 700724), this protein is Regulator of ribonuclease activity A.